The following is a 563-amino-acid chain: NAD(P)H-quinone oxidoreductase chain 4 (563 aa).

A run of 15 helical transmembrane segments spans residues 25 to 45 (FPWL…VPFI), 56 to 76 (WFAL…YLYG), 90 to 110 (VSWL…ISMP), 111 to 131 (LILL…PVTF), 133 to 153 (PKLF…VFAV), 157 to 177 (LLFF…LAIW), 189 to 209 (FIIY…AMGF), 230 to 250 (GFQL…LPIV), 264 to 284 (TAPV…YALM), 298 to 318 (FAPL…LTSF), 335 to 355 (MGFV…GAML), 356 to 376 (QMIS…ATYD), 397 to 417 (FALW…SGFV), 438 to 458 (IVIA…LLSM), and 485 to 505 (VYII…PRLM).

The protein belongs to the complex I subunit 4 family.

Its subcellular location is the cellular thylakoid membrane. It catalyses the reaction a plastoquinone + NADH + (n+1) H(+)(in) = a plastoquinol + NAD(+) + n H(+)(out). The catalysed reaction is a plastoquinone + NADPH + (n+1) H(+)(in) = a plastoquinol + NADP(+) + n H(+)(out). Functionally, NDH-1 shuttles electrons from NAD(P)H, via FMN and iron-sulfur (Fe-S) centers, to quinones in the respiratory chain. The immediate electron acceptor for the enzyme in this species is believed to be plastoquinone. Couples the redox reaction to proton translocation (for every two electrons transferred, four hydrogen ions are translocated across the cytoplasmic membrane), and thus conserves the redox energy in a proton gradient. The sequence is that of NAD(P)H-quinone oxidoreductase chain 4 from Prochlorococcus marinus (strain MIT 9303).